The chain runs to 193 residues: PXMP2/4 family protein 2 (193 aa).

The next 4 helical transmembrane spans lie at 56 to 78 (VATM…YRSL), 96 to 116 (IDQL…TNFI), 132 to 152 (LFYA…INFS), and 160 to 180 (VLYS…ISFD).

It belongs to the peroxisomal membrane protein PXMP2/4 family.

The protein localises to the membrane. The polypeptide is PXMP2/4 family protein 2 (Dictyostelium discoideum (Social amoeba)).